The chain runs to 197 residues: C-type lectin domain family 3 member A (197 aa).

Residues 1-22 form the signal peptide; that stretch reads MAKNGLVICILVITLLLDQTTS. Cystine bridges form between Cys-68/Cys-78, Cys-95/Cys-191, and Cys-167/Cys-183. A C-type lectin domain is found at 74–192; sequence VHKKCYLASE…CRSSKRYICE (119 aa).

As to expression, restricted to cartilage and breast. Also expressed in breast cancers.

It localises to the secreted. Its function is as follows. Promotes cell adhesion to laminin-332 and fibronectin. This chain is C-type lectin domain family 3 member A (CLEC3A), found in Homo sapiens (Human).